Consider the following 66-residue polypeptide: Potassium channel toxin alpha-KTx 27.3 (66 aa).

A signal peptide spans 1–17 (MKLMWLLFLCVLAFSIA).

The protein belongs to the short scorpion toxin superfamily. Potassium channel inhibitor family. Alpha-KTx 27 subfamily. In terms of processing, contains 4 disulfide bonds. In terms of tissue distribution, expressed by the venom gland.

Its subcellular location is the secreted. This is Potassium channel toxin alpha-KTx 27.3 from Lychas mucronatus (Chinese swimming scorpion).